Reading from the N-terminus, the 981-residue chain is Proline-rich transmembrane protein 3 (981 aa).

Residues 1–27 form the signal peptide; it reads MASSPWGCVCGLLLLLLPLLGTGPALG. Residues 28–474 lie on the Extracellular side of the membrane; sequence RGFPRPLENS…RVLSFSWELH (447 aa). Disordered regions lie at residues 43 to 107 and 169 to 457; these read PGAH…GAQR and PPSL…TAPP. Residues 65-85 show a composition bias toward basic and acidic residues; the sequence is PRADSHRNSDVRHAPAEEMPE. An O-glycosylated at one site region spans residues 297–302; the sequence is SWEVSS. S329 carries O-linked (GalNAc...) serine glycosylation. The span at 331–340 shows a compositional bias: basic and acidic residues; the sequence is APDRPSKPER. T363 carries an O-linked (GalNAc...) threonine glycan. N379 is a glycosylation site (N-linked (GlcNAc...) asparagine). The span at 411 to 427 shows a compositional bias: polar residues; sequence APSTSRRGLIRVTTQRA. Low complexity predominate over residues 437-457; the sequence is TASSMASAPASSPPANATAPP. A helical membrane pass occupies residues 475-495; sequence VYGVGVLFLLPALLALAALAA. Residues 496–501 lie on the Cytoplasmic side of the membrane; that stretch reads APAGPR. Residues 502 to 522 traverse the membrane as a helical segment; it reads LALVAAVLVLVASALRSAYML. Topologically, residues 523-542 are extracellular; the sequence is TDPYGSQARLGVRGGLVLYN. Residues 543–563 form a helical membrane-spanning segment; sequence LPFPLLLTALAALTLLGLGAG. The Cytoplasmic segment spans residues 564 to 570; it reads LPPPLQN. Residues 571 to 591 traverse the membrane as a helical segment; it reads PLLLGAVALVHGVGLLATDLL. Residues 592-598 lie on the Extracellular side of the membrane; it reads STWSVLN. The helical transmembrane segment at 599 to 619 threads the bilayer; that stretch reads LLTQGLSCAWGAAVALGTLCL. Residues 620–638 lie on the Cytoplasmic side of the membrane; the sequence is CRRRLLDGPRGWDASPGPR. A helical membrane pass occupies residues 639-659; it reads LLAVAGALGLLASGLQLAAAL. The Extracellular portion of the chain corresponds to 660–679; the sequence is WLYPGPGRVGRFSWAWWGVH. The helical transmembrane segment at 680–700 threads the bilayer; that stretch reads FWLRLLELTWALALALAAVAA. The Cytoplasmic portion of the chain corresponds to 701–981; the sequence is ARPRPPTEHA…RSASSDTIEL (281 aa). The interval 759–807 is disordered; sequence AESGQLATPSSGAWGSAASLGRGPQGGPGLSRNGVGPAPSLSELDLRPP. Residues 765–780 are compositionally biased toward low complexity; sequence ATPSSGAWGSAASLGR. At S777 the chain carries Phosphoserine. R780 carries the post-translational modification Omega-N-methylarginine. Phosphoserine is present on residues S789, S798, S808, S815, S854, S874, S902, S903, and S911. Residues 836-865 are disordered; that stretch reads LRGLASPPPGGALRPRRGSHPKAELDDAGS. The disordered stretch occupies residues 937–981; the sequence is TVQLLPAPTPAPDSTAARQGDGQGEVQPRGKPGESRSASSDTIEL. The span at 972–981 shows a compositional bias: polar residues; it reads RSASSDTIEL.

The protein resides in the membrane. In Homo sapiens (Human), this protein is Proline-rich transmembrane protein 3 (PRRT3).